An 81-amino-acid polypeptide reads, in one-letter code: uncharacterized protein (81 aa).

The signal sequence occupies residues 1–20 (MIDDHEALLLLVLSSGPAAL).

This is an uncharacterized protein from Treponema pallidum (strain Nichols).